The sequence spans 430 residues: Acetyl-CoA acetyltransferase FG05087, mitochondrial (430 aa).

Residues 1–32 (MTVTQLRSAGRLAQLAGHVNGARQFSTRPALR) constitute a mitochondrion transit peptide. C122 serves as the catalytic Acyl-thioester intermediate. Residue Y217 participates in K(+) binding. CoA is bound at residue K260. A278 contacts K(+). Residue S282 coordinates CoA. Active-site proton acceptor residues include H385 and C413. Position 414 (N414) interacts with chloride.

It belongs to the thiolase-like superfamily. Thiolase family. Homotetramer. It depends on K(+) as a cofactor.

The protein localises to the mitochondrion. It carries out the reaction 2 acetyl-CoA = acetoacetyl-CoA + CoA. In terms of biological role, mitochondrial acetyl-CoA acetyltransferase that catalyzes both the formation and degradation of acetoacetyl-CoA. Seems not to be involved in ergosterol biosynthesis. Plays an important role in growth, morphogenesis and maintaining mitochondrial function including the response to oxidative stresses. The polypeptide is Acetyl-CoA acetyltransferase FG05087, mitochondrial (Gibberella zeae (strain ATCC MYA-4620 / CBS 123657 / FGSC 9075 / NRRL 31084 / PH-1) (Wheat head blight fungus)).